Reading from the N-terminus, the 159-residue chain is Probable minor fimbrial protein (159 aa).

The propeptide at 1 to 6 (MKKMHG) is leader sequence. F7 carries the post-translational modification N-methylphenylalanine. Residues 7–29 (FTLIELMIVVAIIGVLASIALMQ) traverse the membrane as a helical segment. 2 disulfide bridges follow: C56–C71 and C140–C153.

The protein belongs to the N-Me-Phe pilin family. The pili are polar flexible filaments of about 5.4 nanometers diameter and 2.5 micrometers average length; they consist of only a single polypeptide chain arranged in a helical configuration of five subunits per turn in the assembled pilus.

It localises to the fimbrium. Its subcellular location is the membrane. The polypeptide is Probable minor fimbrial protein (fimZ) (Dichelobacter nodosus (Bacteroides nodosus)).